The chain runs to 266 residues: GTP-binding protein Rhes (266 aa).

Residue 26-33 coordinates GTP; that stretch reads GASRVGKS. An Effector region motif is present at residues 48-56; that stretch reads YTPTIEDFH. GTP-binding positions include 73-77 and 140-143; these read DTSGN and NKND. Positions 189 to 235 are interaction with GNB1, GNB2 and GNB3; the sequence is MAKLPHEMSPALHRKISVQYGDAFHPRPFCMRRVKEMDAYGMVSPFA. Cysteine 263 carries the cysteine methyl ester modification. A lipid anchor (S-farnesyl cysteine) is attached at cysteine 263. Positions 264 to 266 are cleaved as a propeptide — removed in mature form; the sequence is TIQ.

Belongs to the small GTPase superfamily. RasD family. In terms of assembly, monomer (Potential). Interacts with PIK3CA and UBE2I. Interacts with GNB1, GNB2 and GNB3. Interacts with HTT; interacts with mutant HTT (mHTT) with a much higher affinity than wild type HTT. In terms of processing, farnesylated. Farnesylation is required for membrane targeting. In terms of tissue distribution, pancreatic endocrine cells (islets of Langerhans).

The protein resides in the cell membrane. Functionally, GTPase signaling protein that binds to and hydrolyzes GTP. Regulates signaling pathways involving G-proteins-coupled receptor and heterotrimeric proteins such as GNB1, GNB2 and GNB3. May be involved in selected striatal competencies, mainly locomotor activity and motor coordination. This Homo sapiens (Human) protein is GTP-binding protein Rhes (RASD2).